We begin with the raw amino-acid sequence, 307 residues long: Methionyl-tRNA formyltransferase (307 aa).

Residue 108–111 (SLLP) participates in (6S)-5,6,7,8-tetrahydrofolate binding.

It belongs to the Fmt family.

The enzyme catalyses L-methionyl-tRNA(fMet) + (6R)-10-formyltetrahydrofolate = N-formyl-L-methionyl-tRNA(fMet) + (6S)-5,6,7,8-tetrahydrofolate + H(+). Attaches a formyl group to the free amino group of methionyl-tRNA(fMet). The formyl group appears to play a dual role in the initiator identity of N-formylmethionyl-tRNA by promoting its recognition by IF2 and preventing the misappropriation of this tRNA by the elongation apparatus. The chain is Methionyl-tRNA formyltransferase from Xanthomonas axonopodis pv. citri (strain 306).